The following is a 344-amino-acid chain: Sesquiterpene synthase 9 (344 aa).

Mg(2+)-binding residues include aspartate 88, asparagine 224, serine 228, and glutamate 232. A DDXXD motif motif is present at residues 88 to 92 (DEYSD). The short motif at 224-232 (NDMLSWNVE) is the NSE/DTE motif element. (2E,6E)-farnesyl diphosphate-binding residues include arginine 313 and tyrosine 314.

The protein belongs to the terpene synthase family. It depends on Mg(2+) as a cofactor.

Its function is as follows. Terpene cyclase that catalyzes the cyclization of farnesyl diphosphate (FPP) to a single major sesquiterpene scaffold whose chemical structure is still unknown. The polypeptide is Sesquiterpene synthase 9 (Postia placenta (strain ATCC 44394 / Madison 698-R) (Brown rot fungus)).